The sequence spans 338 residues: Phosphate acyltransferase (338 aa).

Belongs to the PlsX family. In terms of assembly, homodimer. Probably interacts with PlsY.

Its subcellular location is the cytoplasm. The catalysed reaction is a fatty acyl-[ACP] + phosphate = an acyl phosphate + holo-[ACP]. The protein operates within lipid metabolism; phospholipid metabolism. Functionally, catalyzes the reversible formation of acyl-phosphate (acyl-PO(4)) from acyl-[acyl-carrier-protein] (acyl-ACP). This enzyme utilizes acyl-ACP as fatty acyl donor, but not acyl-CoA. The sequence is that of Phosphate acyltransferase from Endomicrobium trichonymphae.